We begin with the raw amino-acid sequence, 358 residues long: Molybdenum import ATP-binding protein ModC 2 (358 aa).

The ABC transporter domain maps to 1–234 (MPEQGIEAQL…PRLPLNHPDE (234 aa)). An ATP-binding site is contributed by 35–42 (GRSGSGKT). The Mop domain maps to 293–358 (NSSILNILRV…AQIKSVALME (66 aa)).

Belongs to the ABC transporter superfamily. Molybdate importer (TC 3.A.1.8) family. As to quaternary structure, the complex is composed of two ATP-binding proteins (ModC), two transmembrane proteins (ModB) and a solute-binding protein (ModA).

The protein resides in the cell inner membrane. It catalyses the reaction molybdate(out) + ATP + H2O = molybdate(in) + ADP + phosphate + H(+). Its function is as follows. Part of the ABC transporter complex ModABC involved in molybdenum import. Responsible for energy coupling to the transport system. This chain is Molybdenum import ATP-binding protein ModC 2, found in Azotobacter vinelandii.